The primary structure comprises 395 residues: G-protein coupled receptor 182 (395 aa).

Residues 1–53 (MSVIPSSRPVSTLAPDNDFREIHNWTELLHLFNQTFSDCHMELNENTKQVVLF) are Extracellular-facing. 2 N-linked (GlcNAc...) asparagine glycosylation sites follow: asparagine 24 and asparagine 33. Residues 54-75 (VFYLAIFVVGLVENVLVICVNC) form a helical membrane-spanning segment. Over 76 to 86 (RRSGRVGMLNL) the chain is Cytoplasmic. Residues 87–109 (YILNMAVADLGIILSLPVWMLEV) traverse the membrane as a helical segment. Topologically, residues 110-123 (MLEYTWLWGSFSCR) are extracellular. An intrachain disulfide couples cysteine 122 to cysteine 198. A helical membrane pass occupies residues 124-145 (FIHYFYLANMYSSIFFLTCLSI). Topologically, residues 146–166 (DRYVTLTNTSPSWQRHQHRIR) are cytoplasmic. A helical membrane pass occupies residues 167-189 (RAVCAGVWVLSAIIPLPEVVHIQ). At 190–213 (LLDGSEPMCLFLAPFETYSAWALA) the chain is on the extracellular side. A helical transmembrane segment spans residues 214–235 (VALSATILGFLLPFPLIAVFNI). The Cytoplasmic portion of the chain corresponds to 236–254 (LSACRLRRQGQTESRRHCL). The chain crosses the membrane as a helical span at residues 255–276 (LMWAYIVVFVICWLPYHVTMLL). The Extracellular portion of the chain corresponds to 277-295 (LTLHTTHIFLHCNLVNFLY). The chain crosses the membrane as a helical span at residues 296–316 (FFYEIIDCFSMLHCVANPILY). Residues 317 to 395 (NFLSPSFRGR…RTPHLHSAIP (79 aa)) are Cytoplasmic-facing. Serine 329 is modified (phosphoserine).

This sequence belongs to the G-protein coupled receptor 1 family. As to expression, expressed in a wide variety of peripheral tissues in the adult rat with prominent expression in lung, testis, adrenal and liver.

The protein resides in the cell membrane. Orphan receptor. This Rattus norvegicus (Rat) protein is G-protein coupled receptor 182 (Gpr182).